The sequence spans 236 residues: Movement and silencing protein TGBp1 (236 aa).

The region spanning 1-117 (MDSEIVERLT…EPTARAHYTC (117 aa)) is the (+)RNA virus helicase ATP-binding domain. Residues 118–236 (NRTHRLGQLT…LYTAHFAPSA (119 aa)) enclose the (+)RNA virus helicase C-terminal domain.

Belongs to the Tymovirales TGBp1 protein family. In terms of assembly, homodimer and homooligomer. Interacts with capsid protein. Interacts with host AGO1; this interaction targets the host protein for degradation, thereby suppressing the antiviral RNA silencing.

The protein resides in the host cytoplasm. Its function is as follows. Transports viral genome to neighboring plant cells directly through plasmosdesmata, without any budding. The movement protein allows efficient cell to cell propagation, by bypassing the host cell wall barrier. Increases plasmodesma size exclusion limit. Acts as a suppressor of RNA-mediated gene silencing, also known as post-transcriptional gene silencing (PTGS), a mechanism of plant viral defense that limits the accumulation of viral RNAs. The sequence is that of Movement and silencing protein TGBp1 from Setaria italica (Foxtail millet).